The sequence spans 144 residues: Small ribosomal subunit protein eS19B (144 aa).

This sequence belongs to the eukaryotic ribosomal protein eS19 family. As to quaternary structure, component of the small ribosomal subunit (SSU). Mature yeast ribosomes consist of a small (40S) and a large (60S) subunit. The 40S small subunit contains 1 molecule of ribosomal RNA (18S rRNA) and 33 different proteins (encoded by 57 genes). The large 60S subunit contains 3 rRNA molecules (25S, 5.8S and 5S rRNA) and 46 different proteins (encoded by 81 genes).

The protein localises to the cytoplasm. Component of the ribosome, a large ribonucleoprotein complex responsible for the synthesis of proteins in the cell. The small ribosomal subunit (SSU) binds messenger RNAs (mRNAs) and translates the encoded message by selecting cognate aminoacyl-transfer RNA (tRNA) molecules. The large subunit (LSU) contains the ribosomal catalytic site termed the peptidyl transferase center (PTC), which catalyzes the formation of peptide bonds, thereby polymerizing the amino acids delivered by tRNAs into a polypeptide chain. The nascent polypeptides leave the ribosome through a tunnel in the LSU and interact with protein factors that function in enzymatic processing, targeting, and the membrane insertion of nascent chains at the exit of the ribosomal tunnel. eS19 is required for proper maturation of the small (40S) ribosomal subunit. Binds to 40S pre-ribosomal particles, probably required after association of NOC4 but before association of ENP1, TSR1 and RIO2 with 20/21S pre-rRNA. In terms of biological role, required for proper maturation of the small (40S) ribosomal subunit. Binds to 40s pre-ribosomal particles, probably required after association of NOC4 but before association of ENP1, TSR1 and RIO2 with 20/21S pre-rRNA. The polypeptide is Small ribosomal subunit protein eS19B (Saccharomyces cerevisiae (strain ATCC 204508 / S288c) (Baker's yeast)).